The primary structure comprises 468 residues: GDNF family receptor alpha-1 (468 aa).

A signal peptide spans 1–24 (MFLATLYFVLPLLDLLMSAEVSGG). 3 repeat units span residues 25–113 (DRLD…LQGN), 150–238 (KGNN…YEER), and 239–342 (ERPN…KNAI). Cys-36 and Cys-42 are joined by a disulfide. N-linked (GlcNAc...) asparagine glycosylation occurs at Asn-59. 10 disulfide bridges follow: Cys-154-Cys-214, Cys-161-Cys-167, Cys-178-Cys-192, Cys-187-Cys-233, Cys-216-Cys-221, Cys-243-Cys-313, Cys-250-Cys-256, Cys-267-Cys-285, Cys-277-Cys-337, and Cys-315-Cys-325. Residues Asn-347 and Asn-406 are each glycosylated (N-linked (GlcNAc...) asparagine). Ser-430 is lipidated: GPI-anchor amidated serine. Residues 431–468 (HITTKSMAAPPSCGLSSLPVMVFTALAALLSVSLAETS) constitute a propeptide, removed in mature form.

Belongs to the GDNFR family. Interacts with GDNF ligand and RET: forms a 2:2:2 ternary complex composed of GDNF ligand, GFRA1 and RET receptor. Interacts with SORL1, either alone or in complex with GDNF. Interaction between SORL1 and GFRA1 leads to GFRA1 internalization, but not degradation. Expressed in the brain, in hippocampal neurons (at protein level). Isoform 1 and isoform 2 are expressed in heart, brain, lung, liver, kidney and testis.

The protein localises to the cell membrane. It is found in the golgi apparatus. It localises to the trans-Golgi network. The protein resides in the endosome. Its subcellular location is the multivesicular body. In terms of biological role, coreceptor for GDNF, a neurotrophic factor that enhances survival and morphological differentiation of dopaminergic neurons and increases their high-affinity dopamine uptake. GDNF-binding leads to autophosphorylation and activation of the RET receptor. The chain is GDNF family receptor alpha-1 (Gfra1) from Mus musculus (Mouse).